The sequence spans 156 residues: ATP synthase subunit b (156 aa).

A helical transmembrane segment spans residues 7-29 (LFAQMVVFLVLAWFTMKFVWPPL).

It belongs to the ATPase B chain family. As to quaternary structure, F-type ATPases have 2 components, F(1) - the catalytic core - and F(0) - the membrane proton channel. F(1) has five subunits: alpha(3), beta(3), gamma(1), delta(1), epsilon(1). F(0) has three main subunits: a(1), b(2) and c(10-14). The alpha and beta chains form an alternating ring which encloses part of the gamma chain. F(1) is attached to F(0) by a central stalk formed by the gamma and epsilon chains, while a peripheral stalk is formed by the delta and b chains.

It is found in the cell inner membrane. F(1)F(0) ATP synthase produces ATP from ADP in the presence of a proton or sodium gradient. F-type ATPases consist of two structural domains, F(1) containing the extramembraneous catalytic core and F(0) containing the membrane proton channel, linked together by a central stalk and a peripheral stalk. During catalysis, ATP synthesis in the catalytic domain of F(1) is coupled via a rotary mechanism of the central stalk subunits to proton translocation. Its function is as follows. Component of the F(0) channel, it forms part of the peripheral stalk, linking F(1) to F(0). The sequence is that of ATP synthase subunit b from Burkholderia pseudomallei (strain 668).